Here is a 32-residue protein sequence, read N- to C-terminus: Photosystem II reaction center protein T (32 aa).

Residues Ala-3–Phe-23 traverse the membrane as a helical segment.

This sequence belongs to the PsbT family. In terms of assembly, PSII is composed of 1 copy each of membrane proteins PsbA, PsbB, PsbC, PsbD, PsbE, PsbF, PsbH, PsbI, PsbJ, PsbK, PsbL, PsbM, PsbT, PsbX, PsbY, Psb30/Ycf12, peripheral proteins PsbO, CyanoQ (PsbQ), PsbU, PsbV and a large number of cofactors. It forms dimeric complexes.

It localises to the cellular thylakoid membrane. Functionally, found at the monomer-monomer interface of the photosystem II (PS II) dimer, plays a role in assembly and dimerization of PSII. PSII is a light-driven water plastoquinone oxidoreductase, using light energy to abstract electrons from H(2)O, generating a proton gradient subsequently used for ATP formation. This is Photosystem II reaction center protein T from Prochlorococcus marinus (strain MIT 9301).